The primary structure comprises 385 residues: Probable caffeine synthase MTL2 (385 aa).

S-adenosyl-L-homocysteine contacts are provided by Tyr18, Cys62, Asn67, Asp101, Leu102, Ser140, Phe141, and Cys157. Positions 158, 161, and 162 each coordinate caffeine. Asn179 contributes to the Mg(2+) binding site. Residue Thr238 participates in caffeine binding. Residues Asp261, Phe263, and Asn264 each contribute to the Mg(2+) site. Tyr369 is a caffeine binding site.

It belongs to the methyltransferase superfamily. Type-7 methyltransferase family. Requires Mg(2+) as cofactor.

The protein operates within alkaloid biosynthesis. May be involved in the biosynthesis of caffeine. This Coffea canephora (Robusta coffee) protein is Probable caffeine synthase MTL2.